The chain runs to 92 residues: Large ribosomal subunit protein uL23c (92 aa).

The protein belongs to the universal ribosomal protein uL23 family. As to quaternary structure, part of the 50S ribosomal subunit.

It localises to the plastid. It is found in the chloroplast. Its function is as follows. Binds to 23S rRNA. This Chara vulgaris (Common stonewort) protein is Large ribosomal subunit protein uL23c (rpl23).